A 258-amino-acid polypeptide reads, in one-letter code: MKITKIEKKKRLYLIEIDEAEHFYITEDTIVHFMLSKNKEILPEQLEEIKTFAQFSYGKNLALYYLSFKQRTEKEVKDYLIRHDINTTVISQILTQLKEEKWLDDSKYIDNILQQNLHSGDKGAFVLKQKLLQKGIESQLIEDMLKDFDFSSICIKTAQKLLKKYQSKLPKRALKDKLKQALTTKGFSYQEAQIALEDLDIENNSENEEELIYKELDKQYRKYSKKYENYELRQRLTQSLARKGFAFDAIKNALREYL.

It belongs to the RecX family.

It is found in the cytoplasm. Modulates RecA activity. In Streptococcus mutans serotype c (strain ATCC 700610 / UA159), this protein is Regulatory protein RecX.